The sequence spans 170 residues: MADLIMGIDPGTLVCGYALIKVENRYHIHPHSFGKVKLSQKLALAHRYKQLFTEISTILQQESPKAVVLETQYVHKNPQSTIKLGMARGVLLLAASLQDVPVFEYAPNTAKKAAVGKGNASKKQVQLMVSKLLRVPDLLAEDNEDIADAFALAMCHAHLAPYQDLKKTLV.

Active-site residues include Asp-9, Glu-70, and Asp-145. Positions 9, 70, and 145 each coordinate Mg(2+).

The protein belongs to the RuvC family. In terms of assembly, homodimer which binds Holliday junction (HJ) DNA. The HJ becomes 2-fold symmetrical on binding to RuvC with unstacked arms; it has a different conformation from HJ DNA in complex with RuvA. In the full resolvosome a probable DNA-RuvA(4)-RuvB(12)-RuvC(2) complex forms which resolves the HJ. The cofactor is Mg(2+).

Its subcellular location is the cytoplasm. The catalysed reaction is Endonucleolytic cleavage at a junction such as a reciprocal single-stranded crossover between two homologous DNA duplexes (Holliday junction).. Functionally, the RuvA-RuvB-RuvC complex processes Holliday junction (HJ) DNA during genetic recombination and DNA repair. Endonuclease that resolves HJ intermediates. Cleaves cruciform DNA by making single-stranded nicks across the HJ at symmetrical positions within the homologous arms, yielding a 5'-phosphate and a 3'-hydroxyl group; requires a central core of homology in the junction. The consensus cleavage sequence is 5'-(A/T)TT(C/G)-3'. Cleavage occurs on the 3'-side of the TT dinucleotide at the point of strand exchange. HJ branch migration catalyzed by RuvA-RuvB allows RuvC to scan DNA until it finds its consensus sequence, where it cleaves and resolves the cruciform DNA. In Chlamydia trachomatis serovar L2 (strain ATCC VR-902B / DSM 19102 / 434/Bu), this protein is Crossover junction endodeoxyribonuclease RuvC.